The following is a 295-amino-acid chain: Geranylfarnesyl diphosphate synthase (295 aa).

Isopentenyl diphosphate-binding residues include lysine 51, arginine 54, and histidine 83. Residues aspartate 90 and aspartate 94 each contribute to the Mg(2+) site. Arginine 99 provides a ligand contact to an all-trans-polyprenyl diphosphate. Residue arginine 100 participates in isopentenyl diphosphate binding. An all-trans-polyprenyl diphosphate contacts are provided by lysine 174, threonine 175, and glutamine 212.

Belongs to the FPP/GGPP synthase family. Homodimer. Requires Mg(2+) as cofactor.

It carries out the reaction isopentenyl diphosphate + (2E,6E,10E)-geranylgeranyl diphosphate = (2E,6E,10E,14E)-geranylfarnesyl diphosphate + diphosphate. Functionally, involved in biosynthesis of the polyprenyl side-chain of methanophenazine, an electron carrier utilized for methanogenesis. Catalyzes the condensation of isopentenyl pyrophosphate with the allylic pyrophosphates to yield geranylfarnesyl diphosphate (GFPP). It prefers geranylgeranyl diphosphate (GGPP) and farnesyl diphosphate (FPP) as allylic substrate. This chain is Geranylfarnesyl diphosphate synthase, found in Methanosarcina mazei (strain ATCC BAA-159 / DSM 3647 / Goe1 / Go1 / JCM 11833 / OCM 88) (Methanosarcina frisia).